Here is a 193-residue protein sequence, read N- to C-terminus: Orotate phosphoribosyltransferase (193 aa).

Residues Arg85, Lys89, His91, and 111 to 119 (DDVLTTGKS) each bind 5-phospho-alpha-D-ribose 1-diphosphate. 2 residues coordinate orotate: Thr115 and Arg143.

This sequence belongs to the purine/pyrimidine phosphoribosyltransferase family. PyrE subfamily. As to quaternary structure, homodimer. Mg(2+) is required as a cofactor.

The enzyme catalyses orotidine 5'-phosphate + diphosphate = orotate + 5-phospho-alpha-D-ribose 1-diphosphate. The protein operates within pyrimidine metabolism; UMP biosynthesis via de novo pathway; UMP from orotate: step 1/2. Catalyzes the transfer of a ribosyl phosphate group from 5-phosphoribose 1-diphosphate to orotate, leading to the formation of orotidine monophosphate (OMP). The sequence is that of Orotate phosphoribosyltransferase from Pyrobaculum islandicum (strain DSM 4184 / JCM 9189 / GEO3).